Consider the following 355-residue polypeptide: MSKQQAQFTNPETPGYVGFANLPNQVHRKSVRKGFEFTLMVVGESGLGKSTLINSLFLTDLYPERVVPGAADKIERTVEIEASTVEIEERGVKLRLTVVDTPGYGDAMNCVDCFKPIISYVDNQFERYLHDESGLNRRHIVDNRVHCCFYFISPFGHGLKPLDVEFMKALHNKVNIVPVIAKADTLTLRERERLKRRVLDEIEEHGIKIYQLPDAESDEDEDFKEQTRLLKASIPFTVVGSNQLIEAKGKKVRGRLYPWGVVEVENPEHNDFLKLRTMLITHMQDLQEVTQDLHYENFRSERLKKGVASKVENVEVTKDQILQEKEAELRRMQEMIARMQAQMQIQSQSGDAQHL.

The 273-residue stretch at 33–305 (KGFEFTLMVV…ENFRSERLKK (273 aa)) folds into the Septin-type G domain. Residues 43–50 (GESGLGKS) form a G1 motif region. Residues 43–50 (GESGLGKS), Thr77, Gly103, 182–190 (KADTLTLRE), Gly240, and Arg255 each bind GTP. The tract at residues 100 to 103 (DTPG) is G3 motif. The interval 181–184 (AKAD) is G4 motif. The segment at 259 to 269 (WGVVEVENPEH) is important for dimerization.

The protein belongs to the TRAFAC class TrmE-Era-EngA-EngB-Septin-like GTPase superfamily. Septin GTPase family. As to quaternary structure, septins polymerize into heterooligomeric protein complexes that form filaments, and associate with cellular membranes, actin filaments and microtubules. GTPase activity is required for filament formation. Can form heterooligomers with other family members and form filaments. Interacts with wdpcp.

It is found in the cytoplasm. It localises to the cytoskeleton. The protein localises to the spindle. Its subcellular location is the cleavage furrow. The protein resides in the midbody. It is found in the cell cortex. It localises to the cell projection. The protein localises to the cilium membrane. Its function is as follows. Filament-forming cytoskeletal GTPase. Required for normal organization of the actin cytoskeleton. Plays a role in the biogenesis of polarized columnar-shaped epithelium. Required for the progression through mitosis through regulation of chromosome congression. During anaphase, may be required for chromosome segregation and spindle elongation. Plays a role in ciliogenesis and collective cell movements including convergent extension during gastrulation. In cilia, required for the integrity of the diffusion barrier at the base of the primary cilium that prevents diffusion of transmembrane proteins between the cilia and plasma membranes. Controls cell shape and not polarization of cells during convergent extension. The polypeptide is Septin-2B (sept2-B) (Xenopus tropicalis (Western clawed frog)).